A 377-amino-acid polypeptide reads, in one-letter code: Chaperone protein DnaJ (377 aa).

The 66-residue stretch at 5–70 (DYYQILGIPK…EKRSAYDQYG (66 aa)) folds into the J domain. Residues 132-210 (GIKKEIQIPT…CHGQGRVETY (79 aa)) form a CR-type zinc finger. Zn(2+)-binding residues include Cys-145, Cys-148, Cys-162, Cys-165, Cys-184, Cys-187, Cys-198, and Cys-201. CXXCXGXG motif repeat units follow at residues 145-152 (CKTCYGSG), 162-169 (CSTCHGKG), 184-191 (CPTCHGKG), and 198-205 (CNLCHGQG).

This sequence belongs to the DnaJ family. Homodimer. Zn(2+) is required as a cofactor.

Its subcellular location is the cytoplasm. Participates actively in the response to hyperosmotic and heat shock by preventing the aggregation of stress-denatured proteins and by disaggregating proteins, also in an autonomous, DnaK-independent fashion. Unfolded proteins bind initially to DnaJ; upon interaction with the DnaJ-bound protein, DnaK hydrolyzes its bound ATP, resulting in the formation of a stable complex. GrpE releases ADP from DnaK; ATP binding to DnaK triggers the release of the substrate protein, thus completing the reaction cycle. Several rounds of ATP-dependent interactions between DnaJ, DnaK and GrpE are required for fully efficient folding. Also involved, together with DnaK and GrpE, in the DNA replication of plasmids through activation of initiation proteins. This is Chaperone protein DnaJ from Buchnera aphidicola subsp. Acyrthosiphon pisum (strain Tuc7).